The sequence spans 171 residues: Ribosome maturation factor RimP (171 aa).

The protein belongs to the RimP family.

The protein localises to the cytoplasm. Functionally, required for maturation of 30S ribosomal subunits. The polypeptide is Ribosome maturation factor RimP (Anaeromyxobacter sp. (strain Fw109-5)).